The sequence spans 86 residues: DNA-directed RNA polymerase subunit omega (86 aa).

Basic and acidic residues predominate over residues 67 to 76 (SAREHAKESQ). The segment at 67–86 (SAREHAKESQVSEEEVREES) is disordered. Over residues 77–86 (VSEEEVREES) the composition is skewed to acidic residues.

The protein belongs to the RNA polymerase subunit omega family. In terms of assembly, the RNAP catalytic core consists of 2 alpha, 1 beta, 1 beta' and 1 omega subunit. When a sigma factor is associated with the core the holoenzyme is formed, which can initiate transcription.

The enzyme catalyses RNA(n) + a ribonucleoside 5'-triphosphate = RNA(n+1) + diphosphate. In terms of biological role, promotes RNA polymerase assembly. Latches the N- and C-terminal regions of the beta' subunit thereby facilitating its interaction with the beta and alpha subunits. This chain is DNA-directed RNA polymerase subunit omega, found in Nitrosococcus oceani (strain ATCC 19707 / BCRC 17464 / JCM 30415 / NCIMB 11848 / C-107).